The following is a 101-amino-acid chain: MGGFNLNEMMAAAKQHAEELQKKMAQTVIEATAGGGSVTVKMNGQKQLLSIKIDPEVVKSGDVEMLQDLVTAAVNEGSRRVDQAMQSNLSGMMGGMGLPGF.

The protein belongs to the YbaB/EbfC family. As to quaternary structure, homodimer.

It is found in the cytoplasm. The protein localises to the nucleoid. Functionally, binds to DNA and alters its conformation. May be involved in regulation of gene expression, nucleoid organization and DNA protection. The sequence is that of Nucleoid-associated protein Acid345_1974 from Koribacter versatilis (strain Ellin345).